A 249-amino-acid chain; its full sequence is DNA repair protein RecO (249 aa).

This sequence belongs to the RecO family.

Functionally, involved in DNA repair and RecF pathway recombination. In Polaromonas sp. (strain JS666 / ATCC BAA-500), this protein is DNA repair protein RecO.